The chain runs to 330 residues: Protein RecA (330 aa).

66 to 73 (GPESSGKT) serves as a coordination point for ATP.

Belongs to the RecA family.

It localises to the cytoplasm. Functionally, can catalyze the hydrolysis of ATP in the presence of single-stranded DNA, the ATP-dependent uptake of single-stranded DNA by duplex DNA, and the ATP-dependent hybridization of homologous single-stranded DNAs. It interacts with LexA causing its activation and leading to its autocatalytic cleavage. This chain is Protein RecA, found in Bacteroides thetaiotaomicron (strain ATCC 29148 / DSM 2079 / JCM 5827 / CCUG 10774 / NCTC 10582 / VPI-5482 / E50).